We begin with the raw amino-acid sequence, 293 residues long: Diaminopimelate epimerase (293 aa).

The substrate site is built by N17, Q49, and N69. C78 functions as the Proton donor in the catalytic mechanism. Residues 79–80 (GN), N169, N203, and 221–222 (ER) contribute to the substrate site. Residue C230 is the Proton acceptor of the active site. 231-232 (GS) contributes to the substrate binding site.

This sequence belongs to the diaminopimelate epimerase family. In terms of assembly, homodimer.

It is found in the cytoplasm. The catalysed reaction is (2S,6S)-2,6-diaminopimelate = meso-2,6-diaminopimelate. It functions in the pathway amino-acid biosynthesis; L-lysine biosynthesis via DAP pathway; DL-2,6-diaminopimelate from LL-2,6-diaminopimelate: step 1/1. Catalyzes the stereoinversion of LL-2,6-diaminopimelate (L,L-DAP) to meso-diaminopimelate (meso-DAP), a precursor of L-lysine and an essential component of the bacterial peptidoglycan. The sequence is that of Diaminopimelate epimerase from Methylobacterium sp. (strain 4-46).